We begin with the raw amino-acid sequence, 152 residues long: Large ribosomal subunit protein bL9 (152 aa).

Belongs to the bacterial ribosomal protein bL9 family.

In terms of biological role, binds to the 23S rRNA. This is Large ribosomal subunit protein bL9 from Saccharophagus degradans (strain 2-40 / ATCC 43961 / DSM 17024).